The primary structure comprises 272 residues: Putative phosphoenolpyruvate synthase regulatory protein (272 aa).

Residue 152–159 participates in ADP binding; the sequence is GVSRCGKT.

Belongs to the pyruvate, phosphate/water dikinase regulatory protein family. PSRP subfamily.

The enzyme catalyses [pyruvate, water dikinase] + ADP = [pyruvate, water dikinase]-phosphate + AMP + H(+). It carries out the reaction [pyruvate, water dikinase]-phosphate + phosphate + H(+) = [pyruvate, water dikinase] + diphosphate. Functionally, bifunctional serine/threonine kinase and phosphorylase involved in the regulation of the phosphoenolpyruvate synthase (PEPS) by catalyzing its phosphorylation/dephosphorylation. The polypeptide is Putative phosphoenolpyruvate synthase regulatory protein (Pseudomonas putida (strain W619)).